The following is a 244-amino-acid chain: PHD finger protein ALFIN-LIKE 2 (244 aa).

A compositionally biased stretch (basic and acidic residues) spans 137–148 (LSDRKHGRDNKS). Residues 137-178 (LSDRKHGRDNKSGADNGSKSRHSGKRANDVQTKTSRPAVVDD) are disordered. Residues 187-239 (ETLCGTCGGRYNANEFWIGCDICERWFHGKCVRITPAKAEHIKHYKCPDCSSS) form a PHD-type zinc finger.

This sequence belongs to the Alfin family. Interacts with H3K4me3 and to a lesser extent with H3K4me2.

It is found in the nucleus. In terms of biological role, histone-binding component that specifically recognizes H3 tails trimethylated on 'Lys-4' (H3K4me3), which mark transcription start sites of virtually all active genes. The protein is PHD finger protein ALFIN-LIKE 2 of Oryza sativa subsp. indica (Rice).